The following is a 297-amino-acid chain: Ribosomal RNA small subunit methyltransferase A (297 aa).

6 residues coordinate S-adenosyl-L-methionine: asparagine 31, leucine 33, glycine 58, glutamate 79, aspartate 104, and asparagine 129.

The protein belongs to the class I-like SAM-binding methyltransferase superfamily. rRNA adenine N(6)-methyltransferase family. RsmA subfamily.

Its subcellular location is the cytoplasm. It catalyses the reaction adenosine(1518)/adenosine(1519) in 16S rRNA + 4 S-adenosyl-L-methionine = N(6)-dimethyladenosine(1518)/N(6)-dimethyladenosine(1519) in 16S rRNA + 4 S-adenosyl-L-homocysteine + 4 H(+). Its function is as follows. Specifically dimethylates two adjacent adenosines (A1518 and A1519) in the loop of a conserved hairpin near the 3'-end of 16S rRNA in the 30S particle. May play a critical role in biogenesis of 30S subunits. In Staphylococcus aureus (strain MRSA252), this protein is Ribosomal RNA small subunit methyltransferase A.